The following is an 81-amino-acid chain: ATP synthase subunit c, chloroplastic (81 aa).

A run of 2 helical transmembrane segments spans residues 4-24 and 57-77; these read VISA…SIGP and LAFM…LLFA.

Belongs to the ATPase C chain family. F-type ATPases have 2 components, F(1) - the catalytic core - and F(0) - the membrane proton channel. F(1) has five subunits: alpha(3), beta(3), gamma(1), delta(1), epsilon(1). F(0) has four main subunits: a(1), b(1), b'(1) and c(10-14). The alpha and beta chains form an alternating ring which encloses part of the gamma chain. F(1) is attached to F(0) by a central stalk formed by the gamma and epsilon chains, while a peripheral stalk is formed by the delta, b and b' chains.

It is found in the plastid. The protein resides in the chloroplast thylakoid membrane. Its function is as follows. F(1)F(0) ATP synthase produces ATP from ADP in the presence of a proton or sodium gradient. F-type ATPases consist of two structural domains, F(1) containing the extramembraneous catalytic core and F(0) containing the membrane proton channel, linked together by a central stalk and a peripheral stalk. During catalysis, ATP synthesis in the catalytic domain of F(1) is coupled via a rotary mechanism of the central stalk subunits to proton translocation. Functionally, key component of the F(0) channel; it plays a direct role in translocation across the membrane. A homomeric c-ring of between 10-14 subunits forms the central stalk rotor element with the F(1) delta and epsilon subunits. This Zygnema circumcarinatum (Green alga) protein is ATP synthase subunit c, chloroplastic.